The chain runs to 416 residues: GTPase ERA1, chloroplastic (416 aa).

The transit peptide at 1–53 directs the protein to the chloroplast; sequence MELGLALRLVAPPPLLPCLSRRALSLPPDFVSSRVLRGRRIHASRLKHGAGVV. The Era-type G domain maps to 117–287; it reads RSGYVAVLGK…KEWILSKLPL (171 aa). Residues 125-132 are G1; the sequence is GKPNVGKS. Residue 125–132 participates in GTP binding; it reads GKPNVGKS. The interval 151 to 155 is G2; the sequence is QTTRH. A G3 region spans residues 172 to 175; the sequence is DTPG. GTP is bound by residues 172–176 and 237–240; these read DTPGV and NKKD. Residues 237 to 240 form a G4 region; it reads NKKD. The tract at residues 266-268 is G5; sequence ISA. The KH type-2 domain maps to 318–395; sequence YRQEIPYSCQ…YLEVEVKVKE (78 aa).

It belongs to the TRAFAC class TrmE-Era-EngA-EngB-Septin-like GTPase superfamily. Era GTPase family.

The protein resides in the plastid. It localises to the chloroplast stroma. Its subcellular location is the chloroplast nucleoid. Functionally, nuclear genome-encoded probable GTPase involved in ribosome biogenesis in chloroplasts. Plays a role in 16S rRNA maturation in plastids and may contribute to the assembly of the small (30S) ribosomal subunit. This Zea mays (Maize) protein is GTPase ERA1, chloroplastic.